The primary structure comprises 482 residues: Glycogen synthase (482 aa).

An ADP-alpha-D-glucose-binding site is contributed by Lys-20.

The protein belongs to the glycosyltransferase 1 family. Bacterial/plant glycogen synthase subfamily.

The catalysed reaction is [(1-&gt;4)-alpha-D-glucosyl](n) + ADP-alpha-D-glucose = [(1-&gt;4)-alpha-D-glucosyl](n+1) + ADP + H(+). The protein operates within glycan biosynthesis; glycogen biosynthesis. Synthesizes alpha-1,4-glucan chains using ADP-glucose. This is Glycogen synthase from Aliivibrio salmonicida (strain LFI1238) (Vibrio salmonicida (strain LFI1238)).